The primary structure comprises 223 residues: UPF0758 protein HD_0732 (223 aa).

An MPN domain is found at 98–220; it reads TINTPHLAIM…YFSFEEERFH (123 aa). Zn(2+)-binding residues include histidine 169, histidine 171, and aspartate 182. Residues 169–182 carry the JAMM motif motif; the sequence is HNHPSGNCTASQAD.

Belongs to the UPF0758 family.

The chain is UPF0758 protein HD_0732 from Haemophilus ducreyi (strain 35000HP / ATCC 700724).